A 207-amino-acid chain; its full sequence is MIGRLRGNLLEKQPPELLIEVSGIGYEVQMPMSCFYELPEVGSEAIIYTHYVVREDAQLLYGFNTKNERALFREVIKANGVGPKLGLAILSGMTAAQFVQSVEREDISTLVKLPGVGKKTAERLVVEMKDRLKGWGAGDLFTPATDAAPMDDGSEFITSPQSAVDEAVSALIALGYKPQQASKTVSQVAKPDMTSEVLIRESLKSMI.

The interval 1–64 (MIGRLRGNLL…EDAQLLYGFN (64 aa)) is domain I. Residues 65 to 143 (TKNERALFRE…GWGAGDLFTP (79 aa)) are domain II. The segment at 144-158 (ATDAAPMDDGSEFIT) is flexible linker. The tract at residues 159–207 (SPQSAVDEAVSALIALGYKPQQASKTVSQVAKPDMTSEVLIRESLKSMI) is domain III.

The protein belongs to the RuvA family. As to quaternary structure, homotetramer. Forms an RuvA(8)-RuvB(12)-Holliday junction (HJ) complex. HJ DNA is sandwiched between 2 RuvA tetramers; dsDNA enters through RuvA and exits via RuvB. An RuvB hexamer assembles on each DNA strand where it exits the tetramer. Each RuvB hexamer is contacted by two RuvA subunits (via domain III) on 2 adjacent RuvB subunits; this complex drives branch migration. In the full resolvosome a probable DNA-RuvA(4)-RuvB(12)-RuvC(2) complex forms which resolves the HJ.

The protein localises to the cytoplasm. Its function is as follows. The RuvA-RuvB-RuvC complex processes Holliday junction (HJ) DNA during genetic recombination and DNA repair, while the RuvA-RuvB complex plays an important role in the rescue of blocked DNA replication forks via replication fork reversal (RFR). RuvA specifically binds to HJ cruciform DNA, conferring on it an open structure. The RuvB hexamer acts as an ATP-dependent pump, pulling dsDNA into and through the RuvAB complex. HJ branch migration allows RuvC to scan DNA until it finds its consensus sequence, where it cleaves and resolves the cruciform DNA. This is Holliday junction branch migration complex subunit RuvA from Aliivibrio fischeri (strain MJ11) (Vibrio fischeri).